Consider the following 236-residue polypeptide: uncharacterized protein (236 aa).

3 disordered regions span residues Met-1–Ser-48, Val-67–Arg-122, and Lys-134–Thr-192. The span at Arg-85–Cys-99 shows a compositional bias: basic residues. Residues Pro-180–Pro-189 show a composition bias toward pro residues.

This is an uncharacterized protein from Encephalitozoon cuniculi (strain GB-M1) (Microsporidian parasite).